Reading from the N-terminus, the 459-residue chain is Transcriptional coactivator YAP1-A (459 aa).

Residues 1–13 show a composition bias toward low complexity; it reads MEPGSQQQPSAPA. A disordered region spans residues 1–22; sequence MEPGSQQQPSAPAQQPPPVGHQ. S30, S80, S98, and S134 each carry phosphoserine; by LATS1 and LATS2. 2 disordered regions span residues 65 to 99 and 126 to 145; these read FKQP…AHSS and SAPH…PLPP. WW domains follow at residues 141–174 and 199–232; these read VPLP…DPRK and GPLP…DPRL. The disordered stretch occupies residues 246 to 268; it reads NAPVKAPPALPPPSPQTGVLGSG. A compositionally biased stretch (pro residues) spans 250-260; the sequence is KAPPALPPPSP. The tract at residues 261 to 459 is transactivation domain; the sequence is QTGVLGSGGN…LDKESFLTWL (199 aa). A coiled-coil region spans residues 269–297; that stretch reads GNQQMRLQQLQMEKERLRLKHQELLRQVR. Positions 344–363 are disordered; the sequence is GTYHSRDESTESGLSMSSYS. The span at 354–363 shows a compositional bias: polar residues; that stretch reads ESGLSMSSYS.

It belongs to the YAP1 family. As to quaternary structure, interacts with tead1. Post-translationally, phosphorylated by lats1 and lats2; leading to cytoplasmic translocation and inactivation.

It is found in the cytoplasm. It localises to the nucleus. The protein localises to the cell junction. Its subcellular location is the tight junction. The protein resides in the cell membrane. In terms of biological role, transcriptional regulator which can act both as a coactivator and a corepressor and is the critical downstream regulatory target in the Hippo signaling pathway that plays a pivotal role in organ size control and tumor suppression by restricting proliferation and promoting apoptosis. Plays a key role in tissue tension and 3D tissue shape by regulating cortical actomyosin network formation. Required for expansion of the neural plate and neural plate border zone progenitor pools. Acts as a direct regulator of pax3 expression via interaction with tead1. In Xenopus laevis (African clawed frog), this protein is Transcriptional coactivator YAP1-A.